The chain runs to 290 residues: 33 kDa chaperonin (290 aa).

2 disulfides stabilise this stretch: Cys235-Cys237 and Cys268-Cys271.

This sequence belongs to the HSP33 family. Under oxidizing conditions two disulfide bonds are formed involving the reactive cysteines. Under reducing conditions zinc is bound to the reactive cysteines and the protein is inactive.

Its subcellular location is the cytoplasm. In terms of biological role, redox regulated molecular chaperone. Protects both thermally unfolding and oxidatively damaged proteins from irreversible aggregation. Plays an important role in the bacterial defense system toward oxidative stress. The chain is 33 kDa chaperonin from Streptococcus pyogenes serotype M12 (strain MGAS2096).